A 404-amino-acid polypeptide reads, in one-letter code: Tryptophan synthase beta chain (404 aa).

K98 bears the N6-(pyridoxal phosphate)lysine mark.

It belongs to the TrpB family. In terms of assembly, tetramer of two alpha and two beta chains. Pyridoxal 5'-phosphate serves as cofactor.

The catalysed reaction is (1S,2R)-1-C-(indol-3-yl)glycerol 3-phosphate + L-serine = D-glyceraldehyde 3-phosphate + L-tryptophan + H2O. Its pathway is amino-acid biosynthesis; L-tryptophan biosynthesis; L-tryptophan from chorismate: step 5/5. Its function is as follows. The beta subunit is responsible for the synthesis of L-tryptophan from indole and L-serine. This Rhodopseudomonas palustris (strain BisB18) protein is Tryptophan synthase beta chain.